Here is a 361-residue protein sequence, read N- to C-terminus: DNA polymerase IV 3 (361 aa).

The UmuC domain occupies 12 to 192 (IIHVDMDAFY…LPVNKFHGVG (181 aa)). Mg(2+)-binding residues include Asp-16 and Asp-110. Residue Glu-111 is part of the active site.

This sequence belongs to the DNA polymerase type-Y family. Monomer. Mg(2+) serves as cofactor.

Its subcellular location is the cytoplasm. The catalysed reaction is DNA(n) + a 2'-deoxyribonucleoside 5'-triphosphate = DNA(n+1) + diphosphate. Functionally, poorly processive, error-prone DNA polymerase involved in untargeted mutagenesis. Copies undamaged DNA at stalled replication forks, which arise in vivo from mismatched or misaligned primer ends. These misaligned primers can be extended by PolIV. Exhibits no 3'-5' exonuclease (proofreading) activity. May be involved in translesional synthesis, in conjunction with the beta clamp from PolIII. The chain is DNA polymerase IV 3 (dinB3) from Mesorhizobium japonicum (strain LMG 29417 / CECT 9101 / MAFF 303099) (Mesorhizobium loti (strain MAFF 303099)).